The chain runs to 142 residues: Transcriptional regulator MraZ (142 aa).

SpoVT-AbrB domains follow at residues 5–51 (SSAL…PRPE) and 77–120 (AQDV…DAAS).

Belongs to the MraZ family. Forms oligomers.

The protein localises to the cytoplasm. It localises to the nucleoid. The sequence is that of Transcriptional regulator MraZ from Bordetella bronchiseptica (strain ATCC BAA-588 / NCTC 13252 / RB50) (Alcaligenes bronchisepticus).